Reading from the N-terminus, the 240-residue chain is MGSCQAGHNLHLCLAHHPPLVCATLILLLLGLSGLGLGGFLLTHTTGLRSPDIPQDWVSFLRSFGQLSLCPMNETVTGTWQGPHVVGLLTTLNFGDGPDRNKTQTFQAKIHGSQIGLTGSSAGESVLVTARVASGRTPGTCLYFSGVPKVLPSSQPPISCSEEGVGNATLSPVMGEECVRVWSHERLVLTELLTSEELALCGSRVLGLGFFLVLLCGLLCCTTAVCFHPRPEFHWSRTRL.

The signal sequence occupies residues M1–G38. Topologically, residues G39 to R204 are extracellular. N167 carries N-linked (GlcNAc...) asparagine glycosylation. The chain crosses the membrane as a helical span at residues V205–V225. Residues C226–L240 are Cytoplasmic-facing.

In terms of assembly, interacts with IGFBP3. Interacts with CASP8.

It localises to the cell membrane. Cell death receptor specific for IGFBP3, may mediate caspase-8-dependent apoptosis upon ligand binding. This chain is Insulin-like growth factor-binding protein 3 receptor (Tmem219), found in Mus musculus (Mouse).